We begin with the raw amino-acid sequence, 205 residues long: Large ribosomal subunit protein uL4 (205 aa).

The tract at residues 43-97 is disordered; that stretch reads GKRQGTSKVKNRSAVRGGGKKPWRQKGTGRARQGSIRAPQWRGGGTVFGPTPRSY. Positions 51–71 are enriched in basic residues; sequence VKNRSAVRGGGKKPWRQKGTG.

The protein belongs to the universal ribosomal protein uL4 family. In terms of assembly, part of the 50S ribosomal subunit.

In terms of biological role, one of the primary rRNA binding proteins, this protein initially binds near the 5'-end of the 23S rRNA. It is important during the early stages of 50S assembly. It makes multiple contacts with different domains of the 23S rRNA in the assembled 50S subunit and ribosome. Its function is as follows. Forms part of the polypeptide exit tunnel. The polypeptide is Large ribosomal subunit protein uL4 (Lactobacillus acidophilus (strain ATCC 700396 / NCK56 / N2 / NCFM)).